The sequence spans 482 residues: UDP-glucose 6-dehydrogenase 2 (482 aa).

Residues 8-13 (GAGYVG), Asp33, Arg38, 86-90 (VNTPT), 127-128 (ST), and Glu163 each bind NAD(+). Substrate is bound by residues 159–163 (EFLAE), 218–225 (KLAANAFL), and 258–271 (RIGPRFLSASVGFG). Cys274 acts as the Nucleophile in catalysis. Residue 274–277 (CFQK) participates in NAD(+) binding. Residue 336 to 337 (FK) participates in substrate binding. An NAD(+)-binding site is contributed by Arg344. Ser395 bears the Phosphoserine mark. Arg449 is a substrate binding site.

Belongs to the UDP-glucose/GDP-mannose dehydrogenase family.

The enzyme catalyses UDP-alpha-D-glucose + 2 NAD(+) + H2O = UDP-alpha-D-glucuronate + 2 NADH + 3 H(+). It functions in the pathway nucleotide-sugar biosynthesis; UDP-alpha-D-glucuronate biosynthesis; UDP-alpha-D-glucuronate from UDP-alpha-D-glucose: step 1/1. Functionally, involved in the biosynthesis of UDP-glucuronic acid (UDP-GlcA), providing nucleotide sugars for cell-wall polymers. This is UDP-glucose 6-dehydrogenase 2 (UGD2) from Oryza sativa subsp. japonica (Rice).